A 152-amino-acid polypeptide reads, in one-letter code: Interleukin-2 (152 aa).

An N-terminal signal peptide occupies residues 1 to 20 (MYRMQLLSCIALTLALVANG). T23 carries O-linked (GalNAc...) threonine glycosylation. A disulfide bridge connects residues C78 and C126.

The protein belongs to the IL-2 family.

It is found in the secreted. Its function is as follows. Cytokine produced by activated CD4-positive helper T-cells and to a lesser extend activated CD8-positive T-cells and natural killer (NK) cells that plays pivotal roles in the immune response and tolerance. Binds to a receptor complex composed of either the high-affinity trimeric IL-2R (IL2RA/CD25, IL2RB/CD122 and IL2RG/CD132) or the low-affinity dimeric IL-2R (IL2RB and IL2RG). Interaction with the receptor leads to oligomerization and conformation changes in the IL-2R subunits resulting in downstream signaling starting with phosphorylation of JAK1 and JAK3. In turn, JAK1 and JAK3 phosphorylate the receptor to form a docking site leading to the phosphorylation of several substrates including STAT5. This process leads to activation of several pathways including STAT, phosphoinositide-3-kinase/PI3K and mitogen-activated protein kinase/MAPK pathways. Functions as a T-cell growth factor and can increase NK-cell cytolytic activity as well. Promotes strong proliferation of activated B-cells and subsequently immunoglobulin production. Plays a pivotal role in regulating the adaptive immune system by controlling the survival and proliferation of regulatory T-cells, which are required for the maintenance of immune tolerance. Moreover, participates in the differentiation and homeostasis of effector T-cell subsets, including Th1, Th2, Th17 as well as memory CD8-positive T-cells. This is Interleukin-2 (IL2) from Orcinus orca (Killer whale).